The chain runs to 382 residues: Gap junction alpha-1 protein (382 aa).

Over 2–23 the chain is Cytoplasmic; the sequence is GDWSALGKLLDKVQAYSTAGGK. Serine 5 bears the Phosphoserine mark. A helical transmembrane segment spans residues 24-44; that stretch reads VWLSVLFIFRILLLGTAVESA. The Extracellular portion of the chain corresponds to 45–76; sequence WGDEQSAFRCNTQQPGCENVCYDKSFPISHVR. 2 cysteine pairs are disulfide-bonded: cysteine 54–cysteine 192 and cysteine 187–cysteine 198. The chain crosses the membrane as a helical span at residues 77 to 97; the sequence is FWVLQIIFVSVPTLLYLAHVF. Over 98–155 the chain is Cytoplasmic; that stretch reads YVMRKEEKLNKKEEELKVAQTDGVNVEMHLKQIEIKKFKYGIEEHGKVKMRGGLLRTY. Lysine 144 participates in a covalent cross-link: Glycyl lysine isopeptide (Lys-Gly) (interchain with G-Cter in SUMO). The helical transmembrane segment at 156-176 threads the bilayer; the sequence is IISILFKSVFEVAFLLIQWYI. At 177-207 the chain is on the extracellular side; that stretch reads YGFSLSAVYTCKRDPCPHQVDCFLSRPTEKT. A helical membrane pass occupies residues 208 to 228; it reads IFIIFMLVVSLVSLALNIIEL. At 229–382 the chain is on the cytoplasmic side; it reads FYVFFKGVKD…SRPRPDDLEI (154 aa). A Glycyl lysine isopeptide (Lys-Gly) (interchain with G-Cter in SUMO) cross-link involves residue lysine 237. Residues 244–382 form an interaction with NOV region; that stretch reads SDPYHATTGP…SRPRPDDLEI (139 aa). The residue at position 247 (tyrosine 247) is a Phosphotyrosine. Phosphoserine is present on residues serine 255, serine 257, and serine 262. Positions 264-382 are interaction with UBQLN4; sequence KYAYFNGCSS…SRPRPDDLEI (119 aa). Position 271 is an S-nitrosocysteine (cysteine 271). Threonine 275 carries the post-translational modification Phosphothreonine. Residues serine 306, serine 314, and serine 325 each carry the phosphoserine modification. Positions 317 to 332 are enriched in polar residues; that stretch reads QNRMGQAGSTISNSHA. The segment at 317–382 is disordered; that stretch reads QNRMGQAGST…SRPRPDDLEI (66 aa). Threonine 326 is subject to Phosphothreonine. Phosphoserine occurs at positions 328, 330, 341, and 365. A compositionally biased stretch (low complexity) spans 362 to 374; sequence RPSSRASSRASSR. Residue serine 368 is modified to Phosphoserine; by PKC/PRKCG and PKC/PRKCD. Serine 369 and serine 373 each carry phosphoserine.

Belongs to the connexin family. Alpha-type (group II) subfamily. As to quaternary structure, a connexon is composed of a hexamer of connexins. Interacts with CSNK1D. Interacts with RIC1/CIP150. Interacts (via C-terminus) with TJP1. Interacts (via C-terminus) with SRC (via SH3 domain). Interacts (not ubiquitinated) with UBQLN4 (via UBA domain). Interacts with CNST. Interacts with SGSM3. Interacts with NOV. Interacts with TMEM65. Interacts with ANK3/ANKG and PKP2. Phosphorylation at Ser-325, Ser-328 and Ser-330 by CK1 modulates gap junction assembly. Phosphorylated at Ser-368 by PRKCG; phosphorylation induces disassembly of gap junction plaques and inhibition of gap junction activity. Phosphorylation at Ser-368 by PRKCD triggers its internalization into small vesicles leading to proteasome-mediated degradation. Post-translationally, sumoylated with SUMO1, SUMO2 and SUMO3, which may regulate the level of functional Cx43 gap junctions at the plasma membrane. May be desumoylated by SENP1 or SENP2. In terms of processing, acetylated in the developing cortex; leading to delocalization from the cell membrane. S-nitrosylation at Cys-271 is enriched at the muscle endothelial gap junction in arteries, it augments channel permeability and may regulate of smooth muscle cell to endothelial cell communication. As to expression, expressed in heart, non-sensory epithelial cells, and in fibrocytes of the spiral ligament and the spiral limbus. Expressed in bladder smooth muscle cells (at protein level). Expressed in astrocytes (at protein level).

It localises to the cell membrane. Its subcellular location is the cell junction. The protein resides in the gap junction. It is found in the endoplasmic reticulum. Gap junction protein that acts as a regulator of bladder capacity. A gap junction consists of a cluster of closely packed pairs of transmembrane channels, the connexons, through which materials of low MW diffuse from one cell to a neighboring cell. Negative regulator of bladder functional capacity: acts by enhancing intercellular electrical and chemical transmission, thus sensitizing bladder muscles to cholinergic neural stimuli and causing them to contract. May play a role in cell growth inhibition through the regulation of NOV expression and localization. Plays an essential role in gap junction communication in the ventricles. Its function is as follows. Connexin 43 is possibly the ATP-induced pore of mouse macrophages. This Mus musculus (Mouse) protein is Gap junction alpha-1 protein (Gja1).